A 287-amino-acid polypeptide reads, in one-letter code: Protease HtpX homolog (287 aa).

The next 2 membrane-spanning stretches (helical) occupy residues Val4–Leu24 and Leu35–Leu53. His139 lines the Zn(2+) pocket. The active site involves Glu140. Residue His143 coordinates Zn(2+). 2 helical membrane passes run Gly147–Ser167 and Ala194–Phe214. Glu219 provides a ligand contact to Zn(2+).

Belongs to the peptidase M48B family. Requires Zn(2+) as cofactor.

It is found in the cell inner membrane. The polypeptide is Protease HtpX homolog (Desulfotalea psychrophila (strain LSv54 / DSM 12343)).